A 487-amino-acid polypeptide reads, in one-letter code: Putative KilA-N domain-containing protein L37 (487 aa).

The segment covering 1–12 has biased composition (basic residues); it reads MKVQKSSKKPLK. Residues 1–137 are disordered; that stretch reads MKVQKSSKKP…DINSDDDNNL (137 aa). The segment covering 22 to 34 has biased composition (low complexity); sequence KSGSKSMKSSKSS. 2 stretches are compositionally biased toward acidic residues: residues 47–77 and 111–136; these read DSEISDNESFDSEISDSESSDNESSDNESSD and VLDDESDDDNQSDNESSDINSDDDNN. One can recognise a KilA-N domain in the interval 175-284; that stretch reads EISKGIYGTF…HKVSKIVNDY (110 aa). The stretch at 290–338 forms a coiled coil; sequence FDKHEQLIKGKDDKIAELTRKIDKQTSLMKDQKSTIKEQDKKINELLSK.

The chain is Putative KilA-N domain-containing protein L37 from Acanthamoeba polyphaga mimivirus (APMV).